A 540-amino-acid chain; its full sequence is Pentatricopeptide repeat-containing protein At1g80880, mitochondrial (540 aa).

The N-terminal 87 residues, 1–87 (MAAIVAIGRK…ETFDINLTAL (87 aa)), are a transit peptide targeting the mitochondrion. 10 PPR repeats span residues 154 to 184 (DQKS…MFNV), 188 to 222 (TRKA…KHTP), 223 to 253 (YDEA…SKKL), 257 to 292 (DVEG…CITP), 293 to 327 (NKDS…GLAP), 328 to 362 (GIEV…GLKP), 363 to 397 (DSVT…NLSP), 402 to 428 (FHAF…DLGP), 429 to 463 (TEET…EIVA), and 464 to 498 (NPAL…GFVG). Residues 514–540 (VRKSKRMNLQKVGSQEGYKGQRSVDRK) are disordered.

Belongs to the PPR family. P subfamily.

The protein resides in the mitochondrion. This Arabidopsis thaliana (Mouse-ear cress) protein is Pentatricopeptide repeat-containing protein At1g80880, mitochondrial.